Here is a 480-residue protein sequence, read N- to C-terminus: Glycogen synthase 1 (480 aa).

An ADP-alpha-D-glucose-binding site is contributed by lysine 15.

It belongs to the glycosyltransferase 1 family. Bacterial/plant glycogen synthase subfamily.

It catalyses the reaction [(1-&gt;4)-alpha-D-glucosyl](n) + ADP-alpha-D-glucose = [(1-&gt;4)-alpha-D-glucosyl](n+1) + ADP + H(+). It functions in the pathway glycan biosynthesis; glycogen biosynthesis. Functionally, synthesizes alpha-1,4-glucan chains using ADP-glucose. In Rhizobium radiobacter (Agrobacterium tumefaciens), this protein is Glycogen synthase 1 (glgA1).